The sequence spans 114 residues: ATP-dependent Clp protease adapter protein ClpS (114 aa).

It belongs to the ClpS family. In terms of assembly, binds to the N-terminal domain of the chaperone ClpA.

Functionally, involved in the modulation of the specificity of the ClpAP-mediated ATP-dependent protein degradation. This is ATP-dependent Clp protease adapter protein ClpS from Bdellovibrio bacteriovorus (strain ATCC 15356 / DSM 50701 / NCIMB 9529 / HD100).